The following is a 213-amino-acid chain: Large ribosomal subunit protein uL1 (213 aa).

The protein belongs to the universal ribosomal protein uL1 family. Part of the 50S ribosomal subunit.

In terms of biological role, binds directly to 23S rRNA. Probably involved in E site tRNA release. Its function is as follows. Protein L1 is also a translational repressor protein, it controls the translation of its operon by binding to its mRNA. This is Large ribosomal subunit protein uL1 from Methanococcoides burtonii (strain DSM 6242 / NBRC 107633 / OCM 468 / ACE-M).